The sequence spans 302 residues: Nitrophorin Cim l NP (302 aa).

Positions 1–20 (MKLLLSAGAALAFVLGLCAA) are cleaved as a signal peptide. Cysteine 80 serves as a coordination point for heme.

Heme b is required as a cofactor. Post-translationally, the N-terminus is blocked. As to expression, expressed in salivary glands.

The protein resides in the secreted. Heme-based protein that delivers nitric oxide gas (NO) to the victim while feeding, resulting in vasodilation. In place of heme, the heme-binding cysteine can also reversibly bind NO when it is present in high concentrations. This chain is Nitrophorin Cim l NP, found in Cimex lectularius (Bed bug).